Reading from the N-terminus, the 255-residue chain is Thrombin-like enzyme batroxobin (255 aa).

The signal sequence occupies residues 1-18 (MVLIRVIANLLILQVSYA). Residues 19 to 24 (QKSSEL) constitute a propeptide that is removed on maturation. A Peptidase S1 domain is found at 25-247 (VIGGDECDIN…YLPWIQSIIA (223 aa)). 6 cysteine pairs are disulfide-bonded: Cys-31/Cys-163, Cys-50/Cys-66, Cys-98/Cys-254, Cys-142/Cys-208, Cys-174/Cys-187, and Cys-198/Cys-223. Residues His-65 and Asp-110 each act as charge relay system in the active site. Residue Asn-170 is glycosylated (N-linked (GlcNAc...) asparagine). The Charge relay system role is filled by Ser-202. Asn-249 carries an N-linked (GlcNAc...) asparagine glycan.

The protein belongs to the peptidase S1 family. Snake venom subfamily. Monomer. As to expression, expressed by the venom gland.

The protein resides in the secreted. It catalyses the reaction Selective cleavage of Arg-|-Xaa bond in fibrinogen, to form fibrin, and release fibrinopeptide A. The specificity of further degradation of fibrinogen varies with species origin of the enzyme.. Its function is as follows. Thrombin-like snake venom serine protease. Cleaves Arg-Gly bonds in fibrinogen alpha chains (FGA). The chain is Thrombin-like enzyme batroxobin from Bothrops atrox (Barba amarilla).